A 254-amino-acid chain; its full sequence is Glutamate racemase (254 aa).

Substrate is bound by residues 7–8 (DS) and 39–40 (YG). Cys70 acts as the Proton donor/acceptor in catalysis. Residues 71 to 72 (NT) and Glu147 each bind substrate. The Proton donor/acceptor role is filled by Cys178. 179-180 (TH) contributes to the substrate binding site.

Belongs to the aspartate/glutamate racemases family. As to quaternary structure, homodimer.

It catalyses the reaction L-glutamate = D-glutamate. Its pathway is cell wall biogenesis; peptidoglycan biosynthesis. Functionally, provides the (R)-glutamate required for cell wall biosynthesis. Converts L- or D-glutamate to D- or L-glutamate, respectively, but not other amino acids such as alanine, aspartate, and glutamine. The protein is Glutamate racemase of Aquifex pyrophilus.